The following is a 313-amino-acid chain: Protein FixB (313 aa).

255–283 provides a ligand contact to FAD; sequence LYLAVGISGQIQHMVGANASQTIFAINKD.

It belongs to the ETF alpha-subunit/FixB family. Heterodimer of FixA and FixB.

Its pathway is amine and polyamine metabolism; carnitine metabolism. In terms of biological role, required for anaerobic carnitine reduction. May bring reductant to CaiA. The polypeptide is Protein FixB (Escherichia coli O127:H6 (strain E2348/69 / EPEC)).